Reading from the N-terminus, the 63-residue chain is LLLISAMVGSMIAAVPEEESLQLSEDERGGCLPHNRFCNALSGPRCCSGLTCKELNIWASKCL.

A signal peptide spans 1–14 (LLLISAMVGSMIAA). A propeptide spanning residues 15-28 (VPEEESLQLSEDER) is cleaved from the precursor. Intrachain disulfides connect cysteine 31–cysteine 47, cysteine 38–cysteine 52, and cysteine 46–cysteine 62.

This sequence belongs to the neurotoxin 01 (U2-agtx) family. Expressed by the venom gland.

Its subcellular location is the secreted. Its function is as follows. Insect active toxin causing rapid but reversible paralysis in crickets. No activity shown in mammals. Does not show effect on mammalian voltage-gated calcium channels. The sequence is that of U2-agatoxin-Ao1v from Agelena orientalis (Funnel-web spider).